Here is a 59-residue protein sequence, read N- to C-terminus: Putative movement protein p6.6 (59 aa).

A helical membrane pass occupies residues 13-35 (RVGPLLVLCLLLLLILFSRSWNV).

It localises to the membrane. Its function is as follows. Cell-to-cell movement. This is Putative movement protein p6.6 from Panicum mosaic virus (strain United States/Kansas 109S) (PMV).